The primary structure comprises 191 residues: Elongation factor P (191 aa).

K34 carries the post-translational modification N6-(3,6-diaminohexanoyl)-5-hydroxylysine.

It belongs to the elongation factor P family. Post-translationally, may be beta-lysylated on the epsilon-amino group of Lys-34 by the combined action of EpmA and EpmB, and then hydroxylated on the C5 position of the same residue by EpmC (if this protein is present). Lysylation is critical for the stimulatory effect of EF-P on peptide-bond formation. The lysylation moiety may extend toward the peptidyltransferase center and stabilize the terminal 3-CCA end of the tRNA. Hydroxylation of the C5 position on Lys-34 may allow additional potential stabilizing hydrogen-bond interactions with the P-tRNA.

The protein localises to the cytoplasm. It functions in the pathway protein biosynthesis; polypeptide chain elongation. In terms of biological role, involved in peptide bond synthesis. Alleviates ribosome stalling that occurs when 3 or more consecutive Pro residues or the sequence PPG is present in a protein, possibly by augmenting the peptidyl transferase activity of the ribosome. Modification of Lys-34 is required for alleviation. This Marinomonas sp. (strain MWYL1) protein is Elongation factor P.